A 269-amino-acid chain; its full sequence is Protein RKD1 (269 aa).

An RWP-RK domain is found at 106–195; it reads TTTTKKRRCR…EKMEGEENED (90 aa). Positions 175 to 216 form a coiled coil; sequence LQKLISNVKELEKMEGEENEDKLRNALEKLEKEKKTIEKLPD. The segment at 230–269 is disordered; it reads CFKANHKRKRRSGMSTPITSSSSSASASSSSYSSVSGFER. Positions 249–269 are enriched in low complexity; that stretch reads SSSSSASASSSSYSSVSGFER.

It localises to the nucleus. In terms of biological role, putative transcription factor. The chain is Protein RKD1 (RKD1) from Arabidopsis thaliana (Mouse-ear cress).